Here is a 460-residue protein sequence, read N- to C-terminus: A-type ATP synthase subunit B (460 aa).

The protein belongs to the ATPase alpha/beta chains family. In terms of assembly, has multiple subunits with at least A(3), B(3), C, D, E, F, H, I and proteolipid K(x).

It localises to the cell membrane. In terms of biological role, component of the A-type ATP synthase that produces ATP from ADP in the presence of a proton gradient across the membrane. The B chain is a regulatory subunit. This chain is A-type ATP synthase subunit B, found in Thermoplasma volcanium (strain ATCC 51530 / DSM 4299 / JCM 9571 / NBRC 15438 / GSS1).